Here is a 108-residue protein sequence, read N- to C-terminus: Protein FMC1 homolog (108 aa).

Belongs to the FMC1 family.

The polypeptide is Protein FMC1 homolog (Caenorhabditis elegans).